We begin with the raw amino-acid sequence, 116 residues long: Large ribosomal subunit protein bL20 (116 aa).

It belongs to the bacterial ribosomal protein bL20 family.

In terms of biological role, binds directly to 23S ribosomal RNA and is necessary for the in vitro assembly process of the 50S ribosomal subunit. It is not involved in the protein synthesizing functions of that subunit. This Thermosynechococcus vestitus (strain NIES-2133 / IAM M-273 / BP-1) protein is Large ribosomal subunit protein bL20.